A 603-amino-acid polypeptide reads, in one-letter code: MTTVPISNIRNFSIVAHIDHGKSTLADRLIQMTGGLTDREMAGKEQVLDSMDIERERGITIKAQTVRLAYRAKDGKDYIFNLMDTPGHVDFAYEVSRSLAACEGSLLVVDASQGVEAQTLANVYQALDNNHEIVPVLNKVDLPAAEPEKVKQQIEDVIGIDASDAVMISAKTGLGVPDVLEAIVTRLPPPKGDRDATLKALLVDSWYDVYLGVVVLIRVVDGVMKKGSRVRMMGTGAAYDVERVGFFTPKMTQVDELGPGEIGFITAAIKEVADTRVGDTITDDRKPVTEMLPGFKPAIPVVFCGLFPVDADDFETLRAAMGKLRLNDASFSFEMETSAALGFGFRCGFLGLLHLEIIQERLSREFDLNLIATAPSVIYKMKLTDGTELEIHNPVDMPDVVKIEEIQEPWIEATILTPDEYLGSVLKLCQDRRGAQKELTYVGARAMVKYDLPLNEVVFDFYDRLKSVSKGYASFDYHLTDYKPADLVKMQILVNAEPVDALSMLVHRTRAEGRGRAMVEKMKELIPPHMFQIPIQAAIGGKVIARETVRALRKDVTAKCYGGDITRKRKLLEKQKEGKKKMRQFGKVDIPQEAFIAALKVDS.

A tr-type G domain is found at 7–191 (SNIRNFSIVA…AIVTRLPPPK (185 aa)). GTP contacts are provided by residues 19–24 (DHGKST) and 138–141 (NKVD).

This sequence belongs to the TRAFAC class translation factor GTPase superfamily. Classic translation factor GTPase family. LepA subfamily.

The protein resides in the cell inner membrane. The enzyme catalyses GTP + H2O = GDP + phosphate + H(+). Functionally, required for accurate and efficient protein synthesis under certain stress conditions. May act as a fidelity factor of the translation reaction, by catalyzing a one-codon backward translocation of tRNAs on improperly translocated ribosomes. Back-translocation proceeds from a post-translocation (POST) complex to a pre-translocation (PRE) complex, thus giving elongation factor G a second chance to translocate the tRNAs correctly. Binds to ribosomes in a GTP-dependent manner. In Bradyrhizobium diazoefficiens (strain JCM 10833 / BCRC 13528 / IAM 13628 / NBRC 14792 / USDA 110), this protein is Elongation factor 4.